The primary structure comprises 266 residues: MKFTPGAVEDAPSYYVDHDNGKYNTQKCVILRNLGLEGDDIAMPASLNHLAKPTHILDLTNNDLVFFPDLHHRDDIETLLLSKNRLMVLDAALLPSKLKSLSLAFNGIENFETLIPLSHCPSTVRDLVLIGNPICHLSEYRQRILALVPSLEVLDFKLVSQAEKAQAVKDHVAVMKKIKEDNRQIHQRKKKALAAEVDGKNTFGRNTKSLTEAAKVTKPRDKTIEVMNTVVGKLTEEKKKKIREQLANASSMEELERLERLLTGGV.

LRR repeat units follow at residues 30–51 (ILRNLGLEGDDIAMPASLNHLA), 53–74 (PTHILDLTNNDLVFFPDLHHRD), 75–95 (DIETLLLSKNRLMVLDAALLP), and 97–118 (KLKSLSLAFNGIENFETLIPLS). The LRRCT domain maps to 132 to 170 (NPICHLSEYRQRILALVPSLEVLDFKLVSQAEKAQAVKD).

This sequence belongs to the U2 small nuclear ribonucleoprotein A family. Associated with the spliceosome.

It is found in the nucleus. Its function is as follows. Involved in pre-mRNA splicing. This chain is U2 small nuclear ribonucleoprotein A' (LEA1), found in Candida glabrata (strain ATCC 2001 / BCRC 20586 / JCM 3761 / NBRC 0622 / NRRL Y-65 / CBS 138) (Yeast).